Here is a 385-residue protein sequence, read N- to C-terminus: Spermidine/putrescine import ATP-binding protein PotA (385 aa).

Residues 27-257 form the ABC transporter domain; sequence ASFRAVSKHY…PANLFVAQFA (231 aa). Residue 59-66 coordinates ATP; sequence GPSGCGKT.

The protein belongs to the ABC transporter superfamily. Spermidine/putrescine importer (TC 3.A.1.11.1) family. In terms of assembly, the complex is composed of two ATP-binding proteins (PotA), two transmembrane proteins (PotB and PotC) and a solute-binding protein (PotD).

The protein resides in the cell inner membrane. It carries out the reaction ATP + H2O + polyamine-[polyamine-binding protein]Side 1 = ADP + phosphate + polyamineSide 2 + [polyamine-binding protein]Side 1.. Its function is as follows. Part of the ABC transporter complex PotABCD involved in spermidine/putrescine import. Responsible for energy coupling to the transport system. This is Spermidine/putrescine import ATP-binding protein PotA from Methylococcus capsulatus (strain ATCC 33009 / NCIMB 11132 / Bath).